Here is a 524-residue protein sequence, read N- to C-terminus: Leucine-rich repeat-containing protein 1 (524 aa).

LRR repeat units lie at residues 11-34 (NRHV…IYRY), 35-58 (ARSL…FFQL), 60-81 (KLRK…IANF), 83-105 (QLVE…AFCK), 107-126 (LQVA…SFPE), 127-149 (LQNL…NIGN), 150-172 (LYNL…SLTQ), 173-196 (LRRL…IGAL), 198-218 (HLKD…EIGN), 219-242 (LKNL…ISGL), 244-264 (SLTY…GIGK), 265-288 (LKKL…IGDC), 290-310 (NLTE…SIGK), 311-334 (LKKL…IGGC), 336-356 (SLTM…EVSQ), 357-380 (AVEL…LTTL), and 382-405 (LKAL…IDRA). The stretch at 456 to 512 (SAIRFLEDEKDEDENETRTLQRRATPHPGELKNMKKTVENLRNDMNAAKGLDSNKNE) forms a coiled coil. The disordered stretch occupies residues 464–485 (EKDEDENETRTLQRRATPHPGE). T480 carries the phosphothreonine modification.

Interacts with DLG1. May form a complex with DLG1 and ERBIN, where interaction between LRRC1 and ERBIN is indirect.

It is found in the cytoplasm. The protein localises to the membrane. This Mus musculus (Mouse) protein is Leucine-rich repeat-containing protein 1 (Lrrc1).